A 243-amino-acid chain; its full sequence is Proteasome subunit beta 1 (243 aa).

The span at 1–14 (MRAPQHNSDFSRTV) shows a compositional bias: polar residues. The interval 1 to 34 (MRAPQHNSDFSRTVDQLADDPNPYEPEIGSMPQN) is disordered. Positions 1–48 (MRAPQHNSDFSRTVDQLADDPNPYEPEIGSMPQNDLTRADLDNVNKTG) are cleaved as a propeptide — removed in mature form; by autocatalysis. Residue threonine 49 is the Nucleophile of the active site.

Belongs to the peptidase T1B family. In terms of assembly, the 20S proteasome core is composed of 14 alpha and 14 beta subunits that assemble into four stacked heptameric rings, resulting in a barrel-shaped structure. The two inner rings, each composed of seven catalytic beta subunits, are sandwiched by two outer rings, each composed of seven alpha subunits. The catalytic chamber with the active sites is on the inside of the barrel. Has a gated structure, the ends of the cylinder being occluded by the N-termini of the alpha-subunits. Is capped at one or both ends by the proteasome regulatory ATPase, PAN.

The protein resides in the cytoplasm. The enzyme catalyses Cleavage of peptide bonds with very broad specificity.. Its activity is regulated as follows. The formation of the proteasomal ATPase PAN-20S proteasome complex, via the docking of the C-termini of PAN into the intersubunit pockets in the alpha-rings, triggers opening of the gate for substrate entry. Interconversion between the open-gate and close-gate conformations leads to a dynamic regulation of the 20S proteasome proteolysis activity. Functionally, component of the proteasome core, a large protease complex with broad specificity involved in protein degradation. The chain is Proteasome subunit beta 1 from Haloterrigena turkmenica (strain ATCC 51198 / DSM 5511 / JCM 9101 / NCIMB 13204 / VKM B-1734 / 4k) (Halococcus turkmenicus).